We begin with the raw amino-acid sequence, 400 residues long: MNSVDIGRYKRIINYLWDPEPRNDLPDEPIWCLGIRYPPNHRGWKTQDQDGSAQGQYEQKTIPTEKANEHQWPEEFLDDVESRIWITYRSNFTPIPKPPNQEANPAMTLTVHLRSQLMDSQGFTSDTGWGCMIRSGQSLLANAMLILLLGRDWRRGTEAGKEAQLLHQFADHPEAPFSIHRFVQHGAEFCNKYPGEWFGPSATARCIQALVAQQGSSELRVYITDDTADIYEDKFARIAQAEHGDFIPTLILVGTRLGIDHVTPAYWDALKEALQLPQSVGIAGGRPSASHYFIGVHGQYLFYLDPHHTRPASLHQDVNDTLTHEEVNTYHTRRLRRIHIKDMDPSMLIGFIIRSREDWTDWKTRILSGRGNSIVHILSEDTANHQARKEAIDEVEALDD.

Cysteine 131 serves as the catalytic Nucleophile. Active-site residues include aspartate 305 and histidine 307.

Belongs to the peptidase C54 family.

The protein resides in the cytoplasm. Its subcellular location is the nucleus. The protein localises to the preautophagosomal structure. The enzyme catalyses [protein]-C-terminal L-amino acid-glycyl-phosphatidylethanolamide + H2O = [protein]-C-terminal L-amino acid-glycine + a 1,2-diacyl-sn-glycero-3-phosphoethanolamine. Cysteine protease that plays a key role in cytoplasm to vacuole transport (Cvt) and autophagy by mediating both proteolytic activation and delipidation of ATG8. Required for selective autophagic degradation of the nucleus (nucleophagy) as well as for mitophagy which contributes to regulate mitochondrial quantity and quality by eliminating the mitochondria to a basal level to fulfill cellular energy requirements and preventing excess ROS production. The protease activity is required for proteolytic activation of ATG8: cleaves the C-terminal amino acid of ATG8 to reveal a C-terminal glycine. ATG8 ubiquitin-like activity requires the exposure of the glycine at the C-terminus for its conjugation to phosphatidylethanolamine (PE) and its insertion to membranes, which is necessary for autophagy. The ATG8-PE conjugate mediates tethering between adjacent membranes and stimulates membrane hemifusion, leading to expansion of the autophagosomal membrane during autophagy. In addition to the protease activity, also catalyzes deconjugation of PE-conjugated forms of ATG8 during macroautophagy: ATG8 delipidation is required to release the protein from membranes, which facilitates multiple events during macroautophagy, and especially for efficient autophagosome biogenesis, the assembly of ATG9-containing tubulovesicular clusters into phagophores/autophagosomes, and for the disassembly of PAS-associated ATG components. ATG8 delipidation by ATG4 also recycles ATG8-PE generated on inappropriate membranes to maintain a reservoir of unlipidated ATG8 that is required for autophagosome formation at the PAS. This Aspergillus clavatus (strain ATCC 1007 / CBS 513.65 / DSM 816 / NCTC 3887 / NRRL 1 / QM 1276 / 107) protein is Probable cysteine protease atg4 (atg4).